A 223-amino-acid chain; its full sequence is AAVPSGASTGIYEALELRAVEHINKTIAPALVSKLAMQEFMILPVGASSFRIGAEVYHNLKDATNVGDEGGFAPNILENKEALELLKAGYTDQVVIGMDVAASEFYRFTASAGIQVVGDDLTVTNPKRAASEKSCNCLLLKVNQIGSVTESLQACKLAQSNGWGVMVSHRSGETEDTFIADLVVGLCTGQIKTGAPCRSERYNQILRIEEELGSKSFRNPLAK.

Ser-8 serves as a coordination point for Mg(2+). Phosphotyrosine is present on Tyr-12. The residue at position 25 (Lys-25) is an N6-acetyllysine. Glu-39 is a substrate binding site. Position 61 is an N6-acetyllysine (Lys-61). Glu-69 (proton donor) is an active-site residue. At Lys-87 the chain carries N6-acetyllysine; alternate. Lys-87 carries the post-translational modification N6-malonyllysine; alternate. An N6-succinyllysine; alternate modification is found at Lys-87. Asp-99 and Asp-119 together coordinate Mg(2+). Substrate is bound at residue Asp-119. An N6-acetyllysine mark is found at Lys-133 and Lys-141. The active-site Proton acceptor is Lys-141. Substrate contacts are provided by residues 168 to 171 (SHRS) and Lys-192. The tract at residues 202–223 (YNQILRIEEELGSKSFRNPLAK) is required for interaction with PLG. Lys-215 carries the N6-acetyllysine; alternate modification. At Lys-215 the chain carries N6-malonyllysine; alternate. Position 215 is an N6-succinyllysine; alternate (Lys-215).

This sequence belongs to the enolase family. In terms of assembly, mammalian enolase is composed of 3 isozyme subunits, alpha, beta and gamma, which can form homodimers or heterodimers which are cell-type and development-specific. ENO1 interacts with PLG in the neuronal plasma membrane and promotes its activation. The C-terminal lysine is required for this binding. Interacts with ENO4 and PGAM2. Interacts with CMTM6. The cofactor is Mg(2+). ISGylated. Post-translationally, lysine 2-hydroxyisobutyrylation (Khib) by p300/EP300 activates the phosphopyruvate hydratase activity.

Its subcellular location is the cytoplasm. It localises to the cell membrane. It catalyses the reaction (2R)-2-phosphoglycerate = phosphoenolpyruvate + H2O. The protein operates within carbohydrate degradation; glycolysis; pyruvate from D-glyceraldehyde 3-phosphate: step 4/5. In terms of biological role, glycolytic enzyme the catalyzes the conversion of 2-phosphoglycerate to phosphoenolpyruvate. In addition to glycolysis, involved in various processes such as growth control, hypoxia tolerance and allergic responses. May also function in the intravascular and pericellular fibrinolytic system due to its ability to serve as a receptor and activator of plasminogen on the cell surface of several cell-types such as leukocytes and neurons. Stimulates immunoglobulin production. The sequence is that of Alpha-enolase from Mesocricetus auratus (Golden hamster).